A 364-amino-acid polypeptide reads, in one-letter code: tRNA 2-selenouridine synthase (364 aa).

The Rhodanese domain occupies leucine 14–isoleucine 137. The S-selanylcysteine intermediate role is filled by cysteine 97.

Belongs to the SelU family. As to quaternary structure, monomer.

The enzyme catalyses 5-methylaminomethyl-2-thiouridine(34) in tRNA + selenophosphate + (2E)-geranyl diphosphate + H2O + H(+) = 5-methylaminomethyl-2-selenouridine(34) in tRNA + (2E)-thiogeraniol + phosphate + diphosphate. The catalysed reaction is 5-methylaminomethyl-2-thiouridine(34) in tRNA + (2E)-geranyl diphosphate = 5-methylaminomethyl-S-(2E)-geranyl-thiouridine(34) in tRNA + diphosphate. It carries out the reaction 5-methylaminomethyl-S-(2E)-geranyl-thiouridine(34) in tRNA + selenophosphate + H(+) = 5-methylaminomethyl-2-(Se-phospho)selenouridine(34) in tRNA + (2E)-thiogeraniol. It catalyses the reaction 5-methylaminomethyl-2-(Se-phospho)selenouridine(34) in tRNA + H2O = 5-methylaminomethyl-2-selenouridine(34) in tRNA + phosphate. Its function is as follows. Involved in the post-transcriptional modification of the uridine at the wobble position (U34) of tRNA(Lys), tRNA(Glu) and tRNA(Gln). Catalyzes the conversion of 2-thiouridine (S2U-RNA) to 2-selenouridine (Se2U-RNA). Acts in a two-step process involving geranylation of 2-thiouridine (S2U) to S-geranyl-2-thiouridine (geS2U) and subsequent selenation of the latter derivative to 2-selenouridine (Se2U) in the tRNA chain. The polypeptide is tRNA 2-selenouridine synthase (Shigella flexneri serotype 5b (strain 8401)).